The sequence spans 830 residues: BLOC-2 complex member HPS5 homolog (830 aa).

WD repeat units follow at residues 25 to 64, 67 to 106, and 114 to 153; these read RNNSRIKFTCFDCSPKYFVFGANSGSLYLYDRITTSFLAI, SQLGTIGKVSISHNEKQIAIGNQTGSIGILSTELAPSTDG, and GGPAFVTSFCWTEDDRELYCGDSRGIVSLIQFSLFMGRNI. The stretch at 578 to 604 forms a coiled coil; it reads DTETIVRLLRKLETLMEENEEPNARLK.

The protein belongs to the HPS5 family.

Functionally, has a role in the biogenesis of eye pigment granules. Eye pigment granules are specialized forms of late endosomes or lysosomes. Biogenesis of pigment granules in the eye requires molecular components required for protein delivery to lysosomes. This Anopheles gambiae (African malaria mosquito) protein is BLOC-2 complex member HPS5 homolog.